Consider the following 470-residue polypeptide: Argininosuccinate lyase (470 aa).

It belongs to the lyase 1 family. Argininosuccinate lyase subfamily.

It is found in the cytoplasm. It carries out the reaction 2-(N(omega)-L-arginino)succinate = fumarate + L-arginine. It functions in the pathway amino-acid biosynthesis; L-arginine biosynthesis; L-arginine from L-ornithine and carbamoyl phosphate: step 3/3. The chain is Argininosuccinate lyase from Mycobacterium tuberculosis (strain ATCC 25618 / H37Rv).